Consider the following 558-residue polypeptide: Dihydroxy-acid dehydratase (558 aa).

Position 49 (cysteine 49) interacts with [2Fe-2S] cluster. Aspartate 81 serves as a coordination point for Mg(2+). Cysteine 122 provides a ligand contact to [2Fe-2S] cluster. Positions 123 and 124 each coordinate Mg(2+). Lysine 124 carries the N6-carboxylysine modification. A [2Fe-2S] cluster-binding site is contributed by cysteine 194. Glutamate 446 provides a ligand contact to Mg(2+). The active-site Proton acceptor is serine 472.

Belongs to the IlvD/Edd family. Homodimer. Requires [2Fe-2S] cluster as cofactor. The cofactor is Mg(2+).

The catalysed reaction is (2R)-2,3-dihydroxy-3-methylbutanoate = 3-methyl-2-oxobutanoate + H2O. It carries out the reaction (2R,3R)-2,3-dihydroxy-3-methylpentanoate = (S)-3-methyl-2-oxopentanoate + H2O. The protein operates within amino-acid biosynthesis; L-isoleucine biosynthesis; L-isoleucine from 2-oxobutanoate: step 3/4. It functions in the pathway amino-acid biosynthesis; L-valine biosynthesis; L-valine from pyruvate: step 3/4. Functions in the biosynthesis of branched-chain amino acids. Catalyzes the dehydration of (2R,3R)-2,3-dihydroxy-3-methylpentanoate (2,3-dihydroxy-3-methylvalerate) into 2-oxo-3-methylpentanoate (2-oxo-3-methylvalerate) and of (2R)-2,3-dihydroxy-3-methylbutanoate (2,3-dihydroxyisovalerate) into 2-oxo-3-methylbutanoate (2-oxoisovalerate), the penultimate precursor to L-isoleucine and L-valine, respectively. The chain is Dihydroxy-acid dehydratase from Synechococcus sp. (strain RCC307).